Reading from the N-terminus, the 94-residue chain is Large ribosomal subunit protein eL33 (94 aa).

It belongs to the eukaryotic ribosomal protein eL33 family.

The polypeptide is Large ribosomal subunit protein eL33 (Aeropyrum pernix (strain ATCC 700893 / DSM 11879 / JCM 9820 / NBRC 100138 / K1)).